The sequence spans 253 residues: MRILLSNDDGYLAPGLAALYEALRPLAEILVMAPEQNCSGASNSLTLSRPLSVSRSAATGFYYVNGTPTDSVHVALTGMLDTKPDLVVSGINNGQNMGDDTLYSGTVAAATEGIMFGVPAIAFSLVHKEWAHLGDAARVAAEIVRHYLDHPLPGQPLLNVNIPNLPYEELKGWRVTRLGKRHPSQPVIRQTNPRGEPIYWIGAAGDALDASEGTDFHATASGYVSITPLQLDLTHTQMLAATRDWARAGSGAS.

4 residues coordinate a divalent metal cation: aspartate 8, aspartate 9, serine 39, and asparagine 92.

The protein belongs to the SurE nucleotidase family. The cofactor is a divalent metal cation.

The protein localises to the cytoplasm. The enzyme catalyses a ribonucleoside 5'-phosphate + H2O = a ribonucleoside + phosphate. Nucleotidase that shows phosphatase activity on nucleoside 5'-monophosphates. The chain is 5'-nucleotidase SurE from Burkholderia pseudomallei (strain 668).